Consider the following 1545-residue polypeptide: MLEKFCNSTFWNSSFLDSPEADLPLCFEQTVLVWIPLGYLWLLAPWQLLHVYKSRTKRSSTTKLYLAKQVFVGFLLILAAIELALVLTEDSGQATVPAVRYTNPSLYLGTWLLVLLIQYSRQWCVQKNSWFLSLFWILSILCGTFQFQTLIRTLLQGDNSNLAYSCLFFISYGFQILILIFSAFSENNESSNNPSSIASFLSSITYSWYDSIILKGYKRPLTLEDVWEVDEEMKTKTLVSKFETHMKRELQKARRALQRRQEKSSQQNSGARLPGLNKNQSQSQDALVLEDVEKKKKKSGTKKDVPKSWLMKALFKTFYMVLLKSFLLKLVNDIFTFVSPQLLKLLISFASDRDTYLWIGYLCAILLFTAALIQSFCLQCYFQLCFKLGVKVRTAIMASVYKKALTLSNLARKEYTVGETVNLMSVDAQKLMDVTNFMHMLWSSVLQIVLSIFFLWRELGPSVLAGVGVMVLVIPINAILSTKSKTIQVKNMKNKDKRLKIMNEILSGIKILKYFAWEPSFRDQVQNLRKKELKNLLAFSQLQCVVIFVFQLTPVLVSVVTFSVYVLVDSNNILDAQKAFTSITLFNILRFPLSMLPMMISSMLQASVSTERLEKYLGGDDLDTSAIRHDCNFDKAMQFSEASFTWEHDSEATVRDVNLDIMAGQLVAVIGPVGSGKSSLISAMLGEMENVHGHITIKGTTAYVPQQSWIQNGTIKDNILFGTEFNEKRYQQVLEACALLPDLEMLPGGDLAEIGEKGINLSGGQKQRISLARATYQNLDIYLLDDPLSAVDAHVGKHIFNKVLGPNGLLKGKTRLLVTHSMHFLPQVDEIVVLGNGTIVEKGSYSALLAKKGEFAKNLKTFLRHTGPEEEATVHDGSEEEDDDYGLISSVEEIPEDAASITMRRENSFRRTLSRSSRSNGRHLKSLRNSLKTRNVNSLKEDEELVKGQKLIKKEFIETGKVKFSIYLEYLQAIGLFSIFFIILAFVMNSVAFIGSNLWLSAWTSDSKIFNSTDYPASQRDMRVGVYGALGLAQGIFVFIAHFWSAFGFVHASNILHKQLLNNILRAPMRFFDTTPTGRIVNRFAGDISTVDDTLPQSLRSWITCFLGIISTLVMICMATPVFTIIVIPLGIIYVSVQMFYVSTSRQLRRLDSVTRSPIYSHFSETVSGLPVIRAFEHQQRFLKHNEVRIDTNQKCVFSWITSNRWLAIRLELVGNLTVFFSALMMVIYRDTLSGDTVGFVLSNALNITQTLNWLVRMTSEIETNIVAVERITEYTKVENEAPWVTDKRPPPDWPSKGKIQFNNYQVRYRPELDLVLRGITCDIGSMEKIGVVGRTGAGKSSLTNCLFRILEAAGGQIIIDGVDIASIGLHDLREKLTIIPQDPILFSGSLRMNLDPFNNYSDEEIWKALELAHLKSFVASLQLGLSHEVTEAGGNLSIGQRQLLCLGRALLRKSKILVLDEATAAVDLETDNLIQTTIQNEFAHCTVITIAHRLHTIMDSDKVMVLDNGKIIECGSPEELLQIPGPFYFMAKEAGIENVNSTKF.

The Extracellular segment spans residues 1–27 (MLEKFCNSTFWNSSFLDSPEADLPLCF). 2 N-linked (GlcNAc...) asparagine glycosylation sites follow: Asn7 and Asn12. A helical transmembrane segment spans residues 28–48 (EQTVLVWIPLGYLWLLAPWQL). Over 49–68 (LHVYKSRTKRSSTTKLYLAK) the chain is Cytoplasmic. The chain crosses the membrane as a helical span at residues 69–89 (QVFVGFLLILAAIELALVLTE). Topologically, residues 90–93 (DSGQ) are extracellular. Residues 94 to 114 (ATVPAVRYTNPSLYLGTWLLV) traverse the membrane as a helical segment. Residues 115 to 126 (LLIQYSRQWCVQ) are Cytoplasmic-facing. The helical transmembrane segment at 127-147 (KNSWFLSLFWILSILCGTFQF) threads the bilayer. The Extracellular segment spans residues 148–165 (QTLIRTLLQGDNSNLAYS). A helical transmembrane segment spans residues 166-186 (CLFFISYGFQILILIFSAFSE). Residues 187-313 (NNESSNNPSS…DVPKSWLMKA (127 aa)) lie on the Cytoplasmic side of the membrane. Positions 253–284 (ARRALQRRQEKSSQQNSGARLPGLNKNQSQSQ) are disordered. Phosphoserine is present on residues Ser281 and Ser283. Residues 314–334 (LFKTFYMVLLKSFLLKLVNDI) traverse the membrane as a helical segment. Residues 322–605 (LLKSFLLKLV…LPMMISSMLQ (284 aa)) enclose the ABC transmembrane type-1 1 domain. At 335–360 (FTFVSPQLLKLLISFASDRDTYLWIG) the chain is on the extracellular side. The chain crosses the membrane as a helical span at residues 361–381 (YLCAILLFTAALIQSFCLQCY). Residues 382–437 (FQLCFKLGVKVRTAIMASVYKKALTLSNLARKEYTVGETVNLMSVDAQKLMDVTNF) lie on the Cytoplasmic side of the membrane. A helical transmembrane segment spans residues 438–458 (MHMLWSSVLQIVLSIFFLWRE). Residues 459–461 (LGP) are Extracellular-facing. The chain crosses the membrane as a helical span at residues 462-482 (SVLAGVGVMVLVIPINAILST). The Cytoplasmic portion of the chain corresponds to 483–544 (KSKTIQVKNM…NLLAFSQLQC (62 aa)). A helical membrane pass occupies residues 545–565 (VVIFVFQLTPVLVSVVTFSVY). Residues 566-587 (VLVDSNNILDAQKAFTSITLFN) are Extracellular-facing. The chain crosses the membrane as a helical span at residues 588 to 608 (ILRFPLSMLPMMISSMLQASV). At 609-971 (STERLEKYLG…VKFSIYLEYL (363 aa)) the chain is on the cytoplasmic side. The ABC transporter 1 domain occupies 637 to 861 (MQFSEASFTW…KGEFAKNLKT (225 aa)). An ATP-binding site is contributed by 671–678 (GPVGSGKS). Residues Ser878, Ser926, Ser930, and Ser938 each carry the phosphoserine modification. The chain crosses the membrane as a helical span at residues 972–992 (QAIGLFSIFFIILAFVMNSVA). The 286-residue stretch at 979 to 1264 (IFFIILAFVM…LVRMTSEIET (286 aa)) folds into the ABC transmembrane type-1 2 domain. Topologically, residues 993-1033 (FIGSNLWLSAWTSDSKIFNSTDYPASQRDMRVGVYGALGLA) are extracellular. Residue Asn1011 is glycosylated (N-linked (GlcNAc...) asparagine). Residues 1034 to 1054 (QGIFVFIAHFWSAFGFVHASN) traverse the membrane as a helical segment. Topologically, residues 1055–1097 (ILHKQLLNNILRAPMRFFDTTPTGRIVNRFAGDISTVDDTLPQ) are cytoplasmic. A helical transmembrane segment spans residues 1098–1118 (SLRSWITCFLGIISTLVMICM). Position 1119 (Ala1119) is a topological domain, extracellular. The helical transmembrane segment at 1120–1140 (TPVFTIIVIPLGIIYVSVQMF) threads the bilayer. At 1141–1211 (YVSTSRQLRR…TSNRWLAIRL (71 aa)) the chain is on the cytoplasmic side. Residues 1212–1232 (ELVGNLTVFFSALMMVIYRDT) form a helical membrane-spanning segment. The Extracellular portion of the chain corresponds to 1233–1234 (LS). A helical transmembrane segment spans residues 1235-1255 (GDTVGFVLSNALNITQTLNWL). The Cytoplasmic portion of the chain corresponds to 1256–1545 (VRMTSEIETN…GIENVNSTKF (290 aa)). One can recognise an ABC transporter 2 domain in the interval 1300–1534 (IQFNNYQVRY…PGPFYFMAKE (235 aa)). 1334-1341 (GRTGAGKS) lines the ATP pocket. At Ser1438 the chain carries Phosphoserine.

This sequence belongs to the ABC transporter superfamily. ABCC family. Conjugate transporter (TC 3.A.1.208) subfamily. As to expression, expressed by polarized cells in liver, kidney and intestine. The highest expression is found in liver. Expressed in small intestine.

The protein resides in the apical cell membrane. The enzyme catalyses ATP + H2O + xenobioticSide 1 = ADP + phosphate + xenobioticSide 2.. It carries out the reaction an S-substituted glutathione(in) + ATP + H2O = an S-substituted glutathione(out) + ADP + phosphate + H(+). The catalysed reaction is taurolithocholate 3-sulfate(in) + ATP + H2O = taurolithocholate 3-sulfate(out) + ADP + phosphate + H(+). It catalyses the reaction leukotriene C4(in) + ATP + H2O = leukotriene C4(out) + ADP + phosphate + H(+). The enzyme catalyses 17beta-estradiol 17-O-(beta-D-glucuronate)(in) + ATP + H2O = 17beta-estradiol 17-O-(beta-D-glucuronate)(out) + ADP + phosphate + H(+). It carries out the reaction (4Z,15Z)-bilirubin IXalpha C8-beta-D-glucuronoside(in) + ATP + H2O = (4Z,15Z)-bilirubin IXalpha C8-beta-D-glucuronoside(out) + ADP + phosphate + H(+). The catalysed reaction is (4Z,15Z)-bilirubin IXalpha C8,C12-beta-D-bisglucuronoside(in) + ATP + H2O = (4Z,15Z)-bilirubin IXalpha C8,C12-beta-D-bisglucuronoside(out) + ADP + phosphate + H(+). Functionally, ATP-dependent transporter of the ATP-binding cassette (ABC) family that binds and hydrolyzes ATP to enable active transport of various substrates including many drugs, toxicants and endogenous compound across cell membranes. Transports a wide variety of conjugated organic anions such as sulfate-, glucuronide- and glutathione (GSH)-conjugates of endo- and xenobiotics substrates. Mediates hepatobiliary excretion of mono- and bis-glucuronidated bilirubin molecules and therefore play an important role in bilirubin detoxification. Also mediates hepatobiliary excretion of others glucuronide conjugates such as 17beta-estradiol 17-glucosiduronic acid and leukotriene C4. Transports sulfated bile salt such as taurolithocholate sulfate. Transports various anticancer drugs, such as anthracycline, vinca alkaloid and methotrexate and HIV-drugs such as protease inhibitors. Confers resistance to several anti-cancer drugs including cisplatin, doxorubicin, epirubicin, methotrexate, etoposide and vincristine. In Homo sapiens (Human), this protein is ATP-binding cassette sub-family C member 2.